The chain runs to 132 residues: Large ribosomal subunit protein uL24 (132 aa).

It belongs to the universal ribosomal protein uL24 family. In terms of assembly, part of the 50S ribosomal subunit.

Functionally, one of two assembly initiator proteins, it binds directly to the 5'-end of the 23S rRNA, where it nucleates assembly of the 50S subunit. Its function is as follows. One of the proteins that surrounds the polypeptide exit tunnel on the outside of the subunit. This Synechococcus sp. (strain JA-2-3B'a(2-13)) (Cyanobacteria bacterium Yellowstone B-Prime) protein is Large ribosomal subunit protein uL24.